Consider the following 82-residue polypeptide: Small ribosomal subunit protein bS16 (82 aa).

This sequence belongs to the bacterial ribosomal protein bS16 family.

The chain is Small ribosomal subunit protein bS16 from Vibrio cholerae serotype O1 (strain ATCC 39541 / Classical Ogawa 395 / O395).